A 560-amino-acid chain; its full sequence is Phenylalanine--tRNA ligase beta subunit (560 aa).

The region spanning 279-354 (LTPKEFEVDL…IAYGYNNIEP (76 aa)) is the B5 domain. Positions 332, 338, 341, and 342 each coordinate Mg(2+).

It belongs to the phenylalanyl-tRNA synthetase beta subunit family. Type 2 subfamily. In terms of assembly, tetramer of two alpha and two beta subunits. Mg(2+) is required as a cofactor.

Its subcellular location is the cytoplasm. It carries out the reaction tRNA(Phe) + L-phenylalanine + ATP = L-phenylalanyl-tRNA(Phe) + AMP + diphosphate + H(+). In Thermococcus sibiricus (strain DSM 12597 / MM 739), this protein is Phenylalanine--tRNA ligase beta subunit.